Reading from the N-terminus, the 417-residue chain is 4-hydroxy-3-methylbut-2-enyl diphosphate reductase (417 aa).

Cysteine 56 contributes to the [4Fe-4S] cluster binding site. Position 86 (histidine 86) interacts with (2E)-4-hydroxy-3-methylbut-2-enyl diphosphate. Histidine 86 is a binding site for dimethylallyl diphosphate. Position 86 (histidine 86) interacts with isopentenyl diphosphate. [4Fe-4S] cluster is bound at residue cysteine 151. Histidine 179 provides a ligand contact to (2E)-4-hydroxy-3-methylbut-2-enyl diphosphate. A dimethylallyl diphosphate-binding site is contributed by histidine 179. Residue histidine 179 participates in isopentenyl diphosphate binding. The active-site Proton donor is glutamate 181. Threonine 244 lines the (2E)-4-hydroxy-3-methylbut-2-enyl diphosphate pocket. Cysteine 282 provides a ligand contact to [4Fe-4S] cluster. Residues serine 311, serine 312, asparagine 313, and serine 374 each contribute to the (2E)-4-hydroxy-3-methylbut-2-enyl diphosphate site. Positions 311, 312, 313, and 374 each coordinate dimethylallyl diphosphate. Serine 311, serine 312, asparagine 313, and serine 374 together coordinate isopentenyl diphosphate.

It belongs to the IspH family. Requires [4Fe-4S] cluster as cofactor.

It catalyses the reaction isopentenyl diphosphate + 2 oxidized [2Fe-2S]-[ferredoxin] + H2O = (2E)-4-hydroxy-3-methylbut-2-enyl diphosphate + 2 reduced [2Fe-2S]-[ferredoxin] + 2 H(+). It carries out the reaction dimethylallyl diphosphate + 2 oxidized [2Fe-2S]-[ferredoxin] + H2O = (2E)-4-hydroxy-3-methylbut-2-enyl diphosphate + 2 reduced [2Fe-2S]-[ferredoxin] + 2 H(+). It functions in the pathway isoprenoid biosynthesis; dimethylallyl diphosphate biosynthesis; dimethylallyl diphosphate from (2E)-4-hydroxy-3-methylbutenyl diphosphate: step 1/1. It participates in isoprenoid biosynthesis; isopentenyl diphosphate biosynthesis via DXP pathway; isopentenyl diphosphate from 1-deoxy-D-xylulose 5-phosphate: step 6/6. Functionally, catalyzes the conversion of 1-hydroxy-2-methyl-2-(E)-butenyl 4-diphosphate (HMBPP) into a mixture of isopentenyl diphosphate (IPP) and dimethylallyl diphosphate (DMAPP). Acts in the terminal step of the DOXP/MEP pathway for isoprenoid precursor biosynthesis. The chain is 4-hydroxy-3-methylbut-2-enyl diphosphate reductase from Gloeobacter violaceus (strain ATCC 29082 / PCC 7421).